The sequence spans 491 residues: Angiopoietin-related protein 1 (491 aa).

The N-terminal stretch at 1–23 (MKTFTWTLGVLFFLLVDTGHCRG) is a signal peptide. Residues 80-168 (ITRMDLENLK…LNVTTEMLKM (89 aa)) are a coiled coil. 2 N-linked (GlcNAc...) asparagine glycosylation sites follow: Asn-160 and Asn-188. Residues 271–491 (FINEGPFKDC…AVQMMIKPID (221 aa)) enclose the Fibrinogen C-terminal domain. Disulfide bonds link Cys-280/Cys-309 and Cys-432/Cys-445.

In terms of tissue distribution, highly expressed in adrenal gland, placenta, thyroid gland, heart, skeletal muscle and small intestine. Weakly expressed in testis, ovary, colon, pancreas, kidney and stomach.

The protein localises to the secreted. This is Angiopoietin-related protein 1 (ANGPTL1) from Homo sapiens (Human).